The primary structure comprises 671 residues: Replication protein A 70 kDa DNA-binding subunit (671 aa).

2 disordered regions span residues Q143–N166 and M190–S219. The span at N199–N213 shows a compositional bias: low complexity. The segment at residues Q240–N322 is a DNA-binding region (OB). The C4-type zinc-finger motif lies at C530–C549.

The protein belongs to the replication factor A protein 1 family. In terms of assembly, component of the replication protein A complex (RPA), a heterotrimeric complex composed of RPA1, RPA2/TEB2 and RPA3/TEB3.

Its function is as follows. As part of the heterotrimeric replication protein A (RPA) complex, binds and stabilizes single-stranded DNA intermediates, that form during DNA replication or upon DNA stress. It prevents their reannealing and in parallel, recruits and activates different proteins and complexes involved in DNA metabolism. Thereby, it plays an essential role both in DNA replication and the cellular response to DNA damage. In the cellular response to DNA damage, the RPA complex controls DNA repair and DNA damage checkpoint activation. In Tetrahymena thermophila (strain SB210), this protein is Replication protein A 70 kDa DNA-binding subunit.